A 545-amino-acid chain; its full sequence is Chaperonin GroEL 1 (545 aa).

Residues 30–33 (TLGP), Lys51, 87–91 (DGTTT), Gly415, and Asp495 each bind ATP.

Belongs to the chaperonin (HSP60) family. In terms of assembly, forms a cylinder of 14 subunits composed of two heptameric rings stacked back-to-back. Interacts with the co-chaperonin GroES.

Its subcellular location is the cytoplasm. It carries out the reaction ATP + H2O + a folded polypeptide = ADP + phosphate + an unfolded polypeptide.. In terms of biological role, together with its co-chaperonin GroES, plays an essential role in assisting protein folding. The GroEL-GroES system forms a nano-cage that allows encapsulation of the non-native substrate proteins and provides a physical environment optimized to promote and accelerate protein folding. This is Chaperonin GroEL 1 from Rhizobium etli (strain ATCC 51251 / DSM 11541 / JCM 21823 / NBRC 15573 / CFN 42).